Consider the following 372-residue polypeptide: Ligninase C (372 aa).

Positions 1-26 (MAFKSLLSFVSVIGALQGANAALTRR) are cleaved as a signal peptide. His-74 (proton acceptor) is an active-site residue. Ca(2+) is bound by residues Asp-75, Gly-93, Asp-95, and Ser-97. Asn-129 carries an N-linked (GlcNAc...) asparagine glycan. His-205 contacts heme b. 5 residues coordinate Ca(2+): Thr-206, Asp-223, Thr-225, Leu-228, and Asp-230. The tract at residues 346–372 (TPFPTFPTDPGPKTAVAPVPKPPAARK) is disordered.

The protein belongs to the peroxidase family. Ligninase subfamily. The cofactor is Ca(2+). Heme b is required as a cofactor.

It carries out the reaction 1-(3,4-dimethoxyphenyl)-2-(2-methoxyphenoxy)propane-1,3-diol + H2O2 = 3,4-dimethoxybenzaldehyde + guaiacol + glycolaldehyde + H2O. The enzyme catalyses 2 (3,4-dimethoxyphenyl)methanol + H2O2 = 2 (3,4-dimethoxyphenyl)methanol radical + 2 H2O. It participates in secondary metabolite metabolism; lignin degradation. In terms of biological role, depolymerization of lignin. Catalyzes the C(alpha)-C(beta) cleavage of the propyl side chains of lignin. This is Ligninase C from Trametes versicolor (White-rot fungus).